The sequence spans 493 residues: Xaa-Pro dipeptidase (493 aa).

A2 is modified (N-acetylalanine). Phosphoserine is present on S167. Position 255 (H255) interacts with a dipeptide. Mn(2+) is bound by residues D276, D287, and H370. D287 is a binding site for a dipeptide. A dipeptide-binding residues include H377 and R398. E412 and E452 together coordinate Mn(2+).

It belongs to the peptidase M24B family. Eukaryotic-type prolidase subfamily. Homodimer. Mn(2+) serves as cofactor.

It catalyses the reaction Xaa-L-Pro dipeptide + H2O = an L-alpha-amino acid + L-proline. Specifically inhibited by the pseudodipeptide CQ31. Inhibition by CQ31 indirectly activates the CARD8 inflammasome: dipeptide accumulation following PEPD inactivation weaky inhibit dipeptidyl peptidases DDP8 and DPP9, relieving DPP8- and/or DPP9-mediated inhibition of CARD8. Functionally, dipeptidase that catalyzes the hydrolysis of dipeptides with a prolyl (Xaa-Pro) or hydroxyprolyl residue in the C-terminal position. The preferred dipeptide substrate is Gly-Pro, but other Xaa-Pro dipeptides, such as Ala-Pro, Met-Pro, Phe-Pro, Val-Pro and Leu-Pro, can be cleaved. Plays an important role in collagen metabolism because the high level of iminoacids in collagen. The polypeptide is Xaa-Pro dipeptidase (Homo sapiens (Human)).